The following is a 492-amino-acid chain: N-succinylglutamate 5-semialdehyde dehydrogenase (492 aa).

220–225 (GSANTG) serves as a coordination point for NAD(+). Catalysis depends on residues Glu-243 and Cys-277.

It belongs to the aldehyde dehydrogenase family. AstD subfamily.

It catalyses the reaction N-succinyl-L-glutamate 5-semialdehyde + NAD(+) + H2O = N-succinyl-L-glutamate + NADH + 2 H(+). The protein operates within amino-acid degradation; L-arginine degradation via AST pathway; L-glutamate and succinate from L-arginine: step 4/5. Catalyzes the NAD-dependent reduction of succinylglutamate semialdehyde into succinylglutamate. This is N-succinylglutamate 5-semialdehyde dehydrogenase from Escherichia coli O6:H1 (strain CFT073 / ATCC 700928 / UPEC).